The sequence spans 621 residues: Nuclear distribution protein nudE homolog 1 (621 aa).

2 stretches are compositionally biased toward polar residues: residues 1-20 (MPSA…SRSD) and 231-263 (RSPS…TLKT). Disordered regions lie at residues 1–21 (MPSA…RSDQ), 218–372 (ELQN…PKSG), 389–537 (ERVQ…GVVN), and 569–621 (ISTP…GETY). A coiled-coil region spans residues 18 to 219 (RSDQLAWYKS…IHEKLRNAEL (202 aa)). Low complexity-rich tracts occupy residues 264–288 (SLMS…RKSM) and 300–310 (SASDSSFGSRS). Positions 323 to 341 (SRATSYAFTSNRPTPSVTN) are enriched in polar residues. Low complexity-rich tracts occupy residues 353–362 (NENTNKHNNN), 404–414 (SPSRTSSRSGS), and 469–496 (SRPS…PSTR). The span at 599-613 (DRLEGDMGPPERKSN) shows a compositional bias: basic and acidic residues.

The protein belongs to the nudE family. In terms of assembly, self-associates. Interacts with nudF.

Its subcellular location is the cytoplasm. The protein localises to the cytoskeleton. In terms of biological role, required for nuclear migration within hyphae during vegetative growth. The polypeptide is Nuclear distribution protein nudE homolog 1 (nde1) (Aspergillus fumigatus (strain ATCC MYA-4609 / CBS 101355 / FGSC A1100 / Af293) (Neosartorya fumigata)).